A 240-amino-acid polypeptide reads, in one-letter code: Phosphoribosylaminoimidazole-succinocarboxamide synthase (240 aa).

The protein belongs to the SAICAR synthetase family.

It catalyses the reaction 5-amino-1-(5-phospho-D-ribosyl)imidazole-4-carboxylate + L-aspartate + ATP = (2S)-2-[5-amino-1-(5-phospho-beta-D-ribosyl)imidazole-4-carboxamido]succinate + ADP + phosphate + 2 H(+). Its pathway is purine metabolism; IMP biosynthesis via de novo pathway; 5-amino-1-(5-phospho-D-ribosyl)imidazole-4-carboxamide from 5-amino-1-(5-phospho-D-ribosyl)imidazole-4-carboxylate: step 1/2. The chain is Phosphoribosylaminoimidazole-succinocarboxamide synthase from Wolbachia pipientis wMel.